The sequence spans 201 residues: Ras-related protein Rab-9B (201 aa).

Residues valine 18, glycine 19, lysine 20, serine 21, serine 22, aspartate 33, serine 34, alanine 36, histidine 38, and threonine 39 each coordinate GTP. Residue serine 21 participates in Mg(2+) binding. The Switch 1 motif lies at 31–42; the sequence is KFDSQAFHTIGV. Residue serine 34 is modified to Phosphoserine. Residues threonine 39 and aspartate 62 each coordinate Mg(2+). Residues 64-78 carry the Switch 2 motif; sequence AGQERFKSLRTPFYR. Residues glycine 65, asparagine 124, lysine 125, alanine 155, and lysine 156 each contribute to the GTP site. 2 S-geranylgeranyl cysteine lipidation sites follow: cysteine 200 and cysteine 201.

This sequence belongs to the small GTPase superfamily. Rab family. Interacts (GTP-bound form) with SGSM1; the GDP-bound form has much lower affinity for SGSM1. The GTP-bound form but not the GDP-bound form interacts with HPS4 and the BLOC-3 complex (heterodimer of HPS1 and HPS4) but does not interact with HPS1 alone. Interacts (GTP-bound form) with NDE1. Requires Mg(2+) as cofactor.

The protein localises to the cell membrane. The protein resides in the cytoplasmic vesicle. Its subcellular location is the phagosome membrane. It carries out the reaction GTP + H2O = GDP + phosphate + H(+). With respect to regulation, regulated by guanine nucleotide exchange factors (GEFs) which promote the exchange of bound GDP for free GTP. Regulated by GTPase activating proteins (GAPs) which increase the GTP hydrolysis activity. Inhibited by GDP dissociation inhibitors (GDIs). The small GTPases Rab are key regulators of intracellular membrane trafficking, from the formation of transport vesicles to their fusion with membranes. Rabs cycle between an inactive GDP-bound form and an active GTP-bound form that is able to recruit to membranes different sets of downstream effectors directly responsible for vesicle formation, movement, tethering and fusion. RAB9B is involved in the transport of proteins between the endosomes and the trans Golgi network. May use NDE1/NDEL1 as an effector to interact with the dynein motor complex in order to control retrograde trafficking of RAB9-associated late endosomes to the TGN. This chain is Ras-related protein Rab-9B (RAB9B), found in Pongo abelii (Sumatran orangutan).